The sequence spans 203 residues: Linker for activation of T-cells family member 2 (203 aa).

Over M1 to E6 the chain is Extracellular. Residues L7–V27 form a helical; Signal-anchor for type III membrane protein membrane-spanning segment. S-palmitoyl cysteine attachment occurs at residues C26 and C29. Topologically, residues H28–I203 are cytoplasmic. The residue at position 59 (Y59) is a Phosphotyrosine. Phosphoserine is present on residues S60 and S95. Phosphotyrosine occurs at positions 139, 160, and 192. The interval E171 to I203 is disordered.

When phosphorylated, interacts with GRB2. May also interact with SOS1, GAB1 and CBL. Phosphorylated on tyrosines following cross-linking of BCR in B-cells, high affinity IgG receptor (FCGR1) in myeloid cells, or high affinity IgE receptor (FCER1) in mast cells; which induces the recruitment of GRB2. As to expression, strongly expressed in testis. Expressed in heart, spleen and lung. Present in B-cells and mast cells (at protein level).

It is found in the cell membrane. Involved in FCER1 (high affinity immunoglobulin epsilon receptor)-mediated signaling in mast cells. May also be involved in BCR (B-cell antigen receptor)-mediated signaling in B-cells and FCGR1 (high affinity immunoglobulin gamma Fc receptor I)-mediated signaling in myeloid cells. Couples activation of these receptors and their associated kinases with distal intracellular events through the recruitment of GRB2. The sequence is that of Linker for activation of T-cells family member 2 (Lat2) from Mus musculus (Mouse).